The following is a 611-amino-acid chain: Protein Pixie (611 aa).

4Fe-4S ferredoxin-type domains follow at residues 15–45 (RIAI…MGKL) and 54–83 (KIAS…IINL). ABC transporter domains are found at residues 78–323 (ITII…FLDG) and 350–570 (IKRM…LELL). Residues 118 to 125 (GQNGIGKS) and 387 to 394 (GENGTGKT) each bind ATP.

It belongs to the ABC transporter superfamily. ABCE family. As to quaternary structure, interacts with components of eIF3 complex, namely eIF3a, eIF3j, eIF3b, eIF3c and eIF3i. Associates with the 40S ribosome subunit in an ATP-dependent manner and independently from the presence of the eIF3 complex. Forms a complex with Git and Pak; the interaction with Pak may be mediated by pix/dPIX. Post-translationally, ubiquitinated by Cnot4. Ubiquitination mediates the recruitment of autophagy receptors to the mitochondrial outer membrane and initiates mitophagy. In terms of tissue distribution, expressed in early and late larval imaginal disks (at protein level).

It localises to the cytoplasm. Functionally, plays a role in translation initiation and quality control of translation. Together with pelo and HBS1, is required for 48S complex formation from 80S ribosomes and dissociation of vacant 80S ribosomes. Stabilizes core components of eIF3 complex promoting their assembly into translation initiation-competent complexes. Together with pelo and HBS1, recognizes stalled ribosomes and promotes dissociation of elongation complexes assembled on non-stop mRNAs; this triggers endonucleolytic cleavage of the mRNA, a mechanism to release non-functional ribosomes and to degrade damaged mRNAs as part of the No-Go Decay (NGD) pathway. Plays a role in the regulation of mRNA turnover. Plays a role in quality control of translation of mitochondrial outer membrane-localized mRNA. As part of the Pink1-regulated signaling, ubiquitinated by Cnot4 upon mitochondria damage; this modification generates polyubiquitin signals that recruits autophagy receptors to the mitochondrial outer membrane to initiate mitophagy. Required in the wing disk for cell division and growth as well as cell survival. During muscle embryogenesis, required for the recruitment of Pak to muscle attachments in the embryo, hence may play a role in proper muscle morphogenesis and proper guidance and targeting of subsets of myotubes. The sequence is that of Protein Pixie from Drosophila melanogaster (Fruit fly).